The chain runs to 157 residues: 6,7-dimethyl-8-ribityllumazine synthase (157 aa).

5-amino-6-(D-ribitylamino)uracil-binding positions include F24, 58–60, and 82–84; these read SFE and AVI. (2S)-2-hydroxy-3-oxobutyl phosphate is bound at residue 87–88; it reads ET. The Proton donor role is filled by H90. Residue F115 participates in 5-amino-6-(D-ribitylamino)uracil binding. R129 contacts (2S)-2-hydroxy-3-oxobutyl phosphate.

The protein belongs to the DMRL synthase family.

The catalysed reaction is (2S)-2-hydroxy-3-oxobutyl phosphate + 5-amino-6-(D-ribitylamino)uracil = 6,7-dimethyl-8-(1-D-ribityl)lumazine + phosphate + 2 H2O + H(+). It participates in cofactor biosynthesis; riboflavin biosynthesis; riboflavin from 2-hydroxy-3-oxobutyl phosphate and 5-amino-6-(D-ribitylamino)uracil: step 1/2. In terms of biological role, catalyzes the formation of 6,7-dimethyl-8-ribityllumazine by condensation of 5-amino-6-(D-ribitylamino)uracil with 3,4-dihydroxy-2-butanone 4-phosphate. This is the penultimate step in the biosynthesis of riboflavin. In Thermus thermophilus (strain ATCC BAA-163 / DSM 7039 / HB27), this protein is 6,7-dimethyl-8-ribityllumazine synthase.